The primary structure comprises 394 residues: Keratin, type I cuticular Ha4 (394 aa).

Residues 1–56 (MSYSCCLPSLGCRTSCSSRPCVPPSCHGYTLPGACNIPANVSNCNWFCEGSFNGSE) are head. The IF rod domain maps to 56-367 (EKETMQFLND…SLLESEDCKL (312 aa)). Positions 57-91 (KETMQFLNDRLASYLEKVRQLERDNAELEKLIQER) are coil 1A. Residues 92–102 (SQQQEPLLCPS) are linker 1. The coil 1B stretch occupies residues 103 to 203 (YQSYFKTIEE…HEEEVNTLRS (101 aa)). The tract at residues 204–219 (QLGDRLNVEVDTAPTV) is linker 12. A coil 2 region spans residues 220 to 363 (DLNQVLNETR…NTYRSLLESE (144 aa)). The segment at 364–394 (DCKLPCNPCATTNASGNSCGPCGTSQKGCCN) is tail.

This sequence belongs to the intermediate filament family. As to expression, expressed in the hair follicles.

This Homo sapiens (Human) protein is Keratin, type I cuticular Ha4 (KRT34).